Consider the following 95-residue polypeptide: CRISPR-associated endoribonuclease Cas2 (95 aa).

Aspartate 10 contacts Mg(2+).

This sequence belongs to the CRISPR-associated endoribonuclease Cas2 protein family. As to quaternary structure, homodimer, forms a heterotetramer with a Cas1 homodimer. Requires Mg(2+) as cofactor.

CRISPR (clustered regularly interspaced short palindromic repeat), is an adaptive immune system that provides protection against mobile genetic elements (viruses, transposable elements and conjugative plasmids). CRISPR clusters contain sequences complementary to antecedent mobile elements and target invading nucleic acids. CRISPR clusters are transcribed and processed into CRISPR RNA (crRNA). Functions as a ssRNA-specific endoribonuclease. Involved in the integration of spacer DNA into the CRISPR cassette. The protein is CRISPR-associated endoribonuclease Cas2 of Geobacter sulfurreducens (strain ATCC 51573 / DSM 12127 / PCA).